The sequence spans 113 residues: MKITLSKRIDLLAFLLPCALALSTTVHAETNKLVIESGDSAQSRQHAAMEKEQWNDTGNLRQKVNKRTEKEWDKADAAFDNRDKCEQSANINAYWEPNTLRCLDRRTGRVITP.

Positions 1-28 are cleaved as a signal peptide; the sequence is MKITLSKRIDLLAFLLPCALALSTTVHA.

Belongs to the UPF0482 family.

The polypeptide is UPF0482 protein YnfB (Escherichia coli O157:H7).